We begin with the raw amino-acid sequence, 452 residues long: Isocitrate dehydrogenase [NADP], mitochondrial (452 aa).

A mitochondrion-targeting transit peptide spans Met1–Tyr39. N6-acetyllysine is present on residues Lys45, Lys48, Lys67, and Lys69. An N6-acetyllysine; alternate mark is found at Lys80 and Lys106. An N6-succinyllysine; alternate mark is found at Lys80 and Lys106. NADP(+) is bound by residues Thr115 to Thr117 and Arg122. Position 117 (Thr117) interacts with substrate. Substrate-binding positions include Ser134 to Arg140 and Arg149. N6-acetyllysine is present on Lys155. Lys166 carries the post-translational modification N6-acetyllysine; alternate. Lys166 bears the N6-succinyllysine; alternate mark. A substrate-binding site is contributed by Arg172. N6-acetyllysine; alternate occurs at positions 180 and 193. N6-succinyllysine; alternate occurs at positions 180 and 193. Position 199 is an N6-acetyllysine (Lys199). Position 256 is an N6-acetyllysine; alternate (Lys256). Lys256 is modified (N6-succinyllysine; alternate). N6-acetyllysine occurs at positions 263, 272, 275, and 280. Lys282 carries the N6-acetyllysine; alternate modification. Lys282 bears the N6-succinyllysine; alternate mark. Asp291 is a binding site for Mn(2+). Lys299 contacts NADP(+). Residue Asp314 participates in Mn(2+) binding. Residues Gly349 to His354 and Asn367 contribute to the NADP(+) site. At Lys384 the chain carries N6-acetyllysine; alternate. Lys384 carries the N6-succinyllysine; alternate modification. N6-acetyllysine is present on residues Lys400, Lys413, and Lys442.

Belongs to the isocitrate and isopropylmalate dehydrogenases family. In terms of assembly, homodimer. Mg(2+) serves as cofactor. The cofactor is Mn(2+). Acetylation at Lys-413 dramatically reduces catalytic activity. Deacetylated by SIRT3.

The protein localises to the mitochondrion. The enzyme catalyses D-threo-isocitrate + NADP(+) = 2-oxoglutarate + CO2 + NADPH. In terms of biological role, plays a role in intermediary metabolism and energy production. It may tightly associate or interact with the pyruvate dehydrogenase complex. The protein is Isocitrate dehydrogenase [NADP], mitochondrial (IDH2) of Macaca fascicularis (Crab-eating macaque).